The primary structure comprises 123 residues: Large-conductance mechanosensitive channel (123 aa).

The next 2 membrane-spanning stretches (helical) occupy residues 14–34 (VIDM…VKSL) and 67–87 (GSFL…FLMV).

Belongs to the MscL family. In terms of assembly, homopentamer.

The protein localises to the cell membrane. In terms of biological role, channel that opens in response to stretch forces in the membrane lipid bilayer. May participate in the regulation of osmotic pressure changes within the cell. This chain is Large-conductance mechanosensitive channel, found in Limosilactobacillus reuteri (strain DSM 20016) (Lactobacillus reuteri).